The chain runs to 279 residues: Protein CMSS1 (279 aa).

The span at 1-10 (MADDLGDEWW) shows a compositional bias: acidic residues. A disordered region spans residues 1-89 (MADDLGDEWW…DVLAKSEPKP (89 aa)). Polar residues predominate over residues 12–22 (NQPTGAGSSPE). Phosphoserine occurs at positions 19 and 24. The residue at position 167 (arginine 167) is an Omega-N-methylarginine. At threonine 212 the chain carries Phosphothreonine.

The protein belongs to the CMS1 family.

This Homo sapiens (Human) protein is Protein CMSS1 (CMSS1).